The sequence spans 354 residues: Probable L-ascorbate-6-phosphate lactonase UlaG (354 aa).

This sequence belongs to the UlaG family. It depends on a divalent metal cation as a cofactor.

It is found in the cytoplasm. It catalyses the reaction L-ascorbate 6-phosphate + H2O = 3-dehydro-L-gulonate 6-phosphate. It functions in the pathway cofactor degradation; L-ascorbate degradation; D-xylulose 5-phosphate from L-ascorbate: step 1/4. Functionally, probably catalyzes the hydrolysis of L-ascorbate-6-P into 3-keto-L-gulonate-6-P. Is essential for L-ascorbate utilization under anaerobic conditions. The sequence is that of Probable L-ascorbate-6-phosphate lactonase UlaG from Shigella boydii serotype 4 (strain Sb227).